A 232-amino-acid polypeptide reads, in one-letter code: Ubiquinone biosynthesis O-methyltransferase (232 aa).

Positions 36, 55, 76, and 120 each coordinate S-adenosyl-L-methionine.

This sequence belongs to the methyltransferase superfamily. UbiG/COQ3 family.

It carries out the reaction a 3-demethylubiquinol + S-adenosyl-L-methionine = a ubiquinol + S-adenosyl-L-homocysteine + H(+). The catalysed reaction is a 3-(all-trans-polyprenyl)benzene-1,2-diol + S-adenosyl-L-methionine = a 2-methoxy-6-(all-trans-polyprenyl)phenol + S-adenosyl-L-homocysteine + H(+). It participates in cofactor biosynthesis; ubiquinone biosynthesis. Its function is as follows. O-methyltransferase that catalyzes the 2 O-methylation steps in the ubiquinone biosynthetic pathway. The sequence is that of Ubiquinone biosynthesis O-methyltransferase from Pseudomonas paraeruginosa (strain DSM 24068 / PA7) (Pseudomonas aeruginosa (strain PA7)).